The primary structure comprises 107 residues: Nucleoid-associated protein Daro_0807 (107 aa).

The protein belongs to the YbaB/EbfC family. In terms of assembly, homodimer.

It is found in the cytoplasm. Its subcellular location is the nucleoid. Binds to DNA and alters its conformation. May be involved in regulation of gene expression, nucleoid organization and DNA protection. The protein is Nucleoid-associated protein Daro_0807 of Dechloromonas aromatica (strain RCB).